The chain runs to 172 residues: WW domain binding protein VOPP1 (172 aa).

The first 22 residues, 1 to 22 (MRRQPAKVAALLLGLLLECTEA), serve as a signal peptide directing secretion. At 23–60 (KKHCWYFEGLYPTYYICRSYEDCCGSRCCVRALSIQRL) the chain is on the extracellular side. A helical transmembrane segment spans residues 61–81 (WYFWFLLMMGVLFCCGAGFFI). At 82–172 (RRRMYPPPLI…PPYEQVVKAK (91 aa)) the chain is on the cytoplasmic side. The interval 102–153 (RQPPNPGPGAQQPGPPYYTDPGGPGMNPVGNSMAMAFQVPPNSPQGSVACPP) is disordered. A compositionally biased stretch (pro residues) spans 104-119 (PPNPGPGAQQPGPPYY).

Belongs to the VOPP1/ECOP family. In terms of assembly, interacts with WWOX (via WW domain). In terms of tissue distribution, widely expressed with highest levels in thymus and ovary.

The protein localises to the cytoplasmic vesicle membrane. The protein resides in the late endosome membrane. It localises to the lysosome membrane. In terms of biological role, increases the transcriptional activity of NFKB1 by facilitating its nuclear translocation, DNA-binding and associated apoptotic response, when overexpressed. May sequester WWOX in lysosomal vesicles and thereby regulate WWOX role as tumor suppressor. The polypeptide is WW domain binding protein VOPP1 (Homo sapiens (Human)).